A 156-amino-acid chain; its full sequence is Arginine repressor (156 aa).

This sequence belongs to the ArgR family.

The protein resides in the cytoplasm. The protein operates within amino-acid biosynthesis; L-arginine biosynthesis [regulation]. Functionally, regulates arginine biosynthesis genes. The sequence is that of Arginine repressor from Shewanella sp. (strain ANA-3).